Here is a 231-residue protein sequence, read N- to C-terminus: Achaete-scute homolog 1 (231 aa).

Disordered stretches follow at residues 1–24 and 39–92; these read MESS…FLPP and AAAA…PELM. The span at 39-51 shows a compositional bias: low complexity; sequence AAAAAQSAQQQQP. Basic residues predominate over residues 76–85; it reads SAAKQVKRQR. The bHLH domain maps to 113–165; that stretch reads AAVARRNERERNRVKLVNLGFATLREHVPNGAANKKMSKVETLRSAVEYIRAL. Position 151 is an N6-acetyllysine (lysine 151).

In terms of assembly, efficient DNA binding requires dimerization with another bHLH protein. Forms a heterodimer with TCF3. In terms of tissue distribution, developing CNS and PNS at embryonic and postnatal stages. Expressed in the epithelium of glandular stomach.

It localises to the nucleus. In terms of biological role, transcription factor that plays a key role in neuronal differentiation: acts as a pioneer transcription factor, accessing closed chromatin to allow other factors to bind and activate neural pathways. Directly binds the E box motif (5'-CANNTG-3') on promoters and promotes transcription of neuronal genes. The combination of three transcription factors, ASCL1, POU3F2/BRN2 and MYT1L, is sufficient to reprogram fibroblasts and other somatic cells into induced neuronal (iN) cells in vitro. Plays a role at early stages of development of specific neural lineages in most regions of the CNS, and of several lineages in the PNS. Essential for the generation of olfactory and autonomic neurons. Acts synergistically with FOXN4 to specify the identity of V2b neurons rather than V2a from bipotential p2 progenitors during spinal cord neurogenesis, probably through DLL4-NOTCH signaling activation. Involved in the regulation of neuroendocrine cell development in the glandular stomach. This is Achaete-scute homolog 1 from Mus musculus (Mouse).